An 839-amino-acid polypeptide reads, in one-letter code: A disintegrin and metalloproteinase with thrombospondin motifs 4 (839 aa).

The N-terminal stretch at 1–51 (MSHMDSHPGRGLADGWLWGIQPRLLLPTVPVSGSRLVWLLLLASLLPSAWP) is a signal peptide. A propeptide spanning residues 52 to 212 (ASPLPREEEI…PSPSPRRAKR (161 aa)) is cleaved from the precursor. Residue Asn68 is glycosylated (N-linked (GlcNAc...) asparagine). The segment at 166 to 209 (EGGAPNSAGGPGAHILRRKSPVSGQGPMCNVKAPPGKPSPSPRR) is disordered. The Cysteine switch motif lies at 192 to 199 (PMCNVKAP). Cys194 provides a ligand contact to Zn(2+). One can recognise a Peptidase M12B domain in the interval 218-428 (RFVETLVVAD…GFGHCLLDKP (211 aa)). Intrachain disulfides connect Cys293–Cys345, Cys322–Cys327, Cys339–Cys423, Cys377–Cys407, Cys449–Cys472, Cys460–Cys482, Cys467–Cys501, Cys495–Cys506, Cys532–Cys569, Cys536–Cys574, and Cys547–Cys559. His361 contacts Zn(2+). Residue Glu362 is part of the active site. Residues His365 and His371 each coordinate Zn(2+). The Disintegrin domain occupies 437–519 (TFPGKDYDAD…DQLQAFNVPQ (83 aa)). Positions 520–575 (AGGWGPWGSWGDCSRSCGGGVQFSSRDCTRPVPRNGGKYCEGRRTRFRSCNTQDCP) constitute a TSP type-1 domain. The spacer stretch occupies residues 686–839 (SKQSGSFKKF…LRRRSWAGRK (154 aa)).

Interacts with SRPX2. It depends on Zn(2+) as a cofactor. Post-translationally, the precursor is cleaved by a furin endopeptidase. In terms of processing, glycosylated. Can be O-fucosylated by POFUT2 on a serine or a threonine residue found within the consensus sequence C1-X(2)-(S/T)-C2-G of the TSP type-1 repeat domains where C1 and C2 are the first and second cysteine residue of the repeat, respectively. Fucosylated repeats can then be further glycosylated by the addition of a beta-1,3-glucose residue by the glucosyltransferase, B3GALTL. Fucosylation mediates the efficient secretion of ADAMTS family members. Can also be C-glycosylated with one or two mannose molecules on tryptophan residues within the consensus sequence W-X-X-W of the TPRs, and N-glycosylated. These other glycosylations can also facilitate secretion.

It is found in the secreted. The protein localises to the extracellular space. It localises to the extracellular matrix. The enzyme catalyses Glutamyl endopeptidase. Bonds cleaved include 370-Thr-Glu-Gly-Glu-|-Ala-Arg-Gly-Ser-377 in the interglobular domain of mammalian aggrecan.. Its function is as follows. Cleaves aggrecan, a cartilage proteoglycan, at the '392-Glu-|-Ala-393' site and may be involved in its turnover. Also cleaves COMP. May play an important role in the destruction of aggrecan in arthritic diseases. This is A disintegrin and metalloproteinase with thrombospondin motifs 4 (ADAMTS4) from Bos taurus (Bovine).